A 145-amino-acid chain; its full sequence is MNGRVDYLVTEEEINLTRGPSGLGFNIVGGTDQQYVSNDSGIFVSRIKENGAAALDGRLQEGDKILSVNGQDLKNLLHQDAVDLFRNAGYAVSLRVQHRLQVQNGPIGPQGEGEPSGIPIAMVLVPVFALTMVAAWAFMRYRQRL.

Residues 1 to 117 (MNGRVDYLVT…GPQGEGEPSG (117 aa)) are Cytoplasmic-facing. Positions 13–100 (EINLTRGPSG…AVSLRVQHRL (88 aa)) constitute a PDZ domain. The chain crosses the membrane as a helical; Anchor for type IV membrane protein span at residues 118–138 (IPIAMVLVPVFALTMVAAWAF). At 139–145 (MRYRQRL) the chain is on the mitochondrial intermembrane side.

Binds (via the PDZ domain) to isoform 2A of SYNJ2 (via the unique motif in the C-terminus). Interacts (via C-terminus) with RALBP1. Interacts (via PDZ domain) with ACVR2A (via C-terminus) and ACVR2B (via C-terminus). Forms a ternary complex with ACVR2A and RALBP1. Interacts with MAPK12. Interacts with DLL1; enhances DLL1 protein stability, and promotes notch signaling in endothelial cells.

The protein resides in the mitochondrion outer membrane. Its subcellular location is the cytoplasm. It is found in the perinuclear region. Its function is as follows. Regulates endocytosis of activin type 2 receptor kinases through the Ral/RALBP1-dependent pathway and may be involved in suppression of activin-induced signal transduction. The chain is Synaptojanin-2-binding protein from Bos taurus (Bovine).